We begin with the raw amino-acid sequence, 624 residues long: Laccase-1 (624 aa).

The first 20 residues, 1–20 (MRGVVKLFFLSCSLVSLVSS), serve as a signal peptide directing secretion. Plastocyanin-like domains are found at residues 69-183 (TKAL…HSPN) and 195-355 (DRIV…VVRY). Cu cation contacts are provided by histidine 117, histidine 119, histidine 162, and histidine 164. Cysteines 138 and 578 form a disulfide. 3 N-linked (GlcNAc...) asparagine glycosylation sites follow: asparagine 242, asparagine 320, and asparagine 430. Residues 469–562 (IIINNLDGVI…GKLAVVVIQP (94 aa)) enclose the Plastocyanin-like 3 domain. Cu cation contacts are provided by histidine 480, histidine 483, and histidine 485. Asparagine 503 is a glycosylation site (N-linked (GlcNAc...) asparagine). Cu cation-binding residues include histidine 543, cysteine 544, histidine 545, and histidine 549. A disordered region spans residues 582-603 (DPNAFGPARRSPSPSIQSSKTS). Residues 592 to 603 (SPSPSIQSSKTS) are compositionally biased toward low complexity.

The protein belongs to the multicopper oxidase family. The cofactor is Cu cation.

The protein localises to the secreted. Its subcellular location is the cell wall. The catalysed reaction is 4 hydroquinone + O2 = 4 benzosemiquinone + 2 H2O. Functionally, laccase that catalyzes the oxidation of certain aromatic compounds, including L-dopa, to quinones, which then polymerize to melanin. Able to oxidize a wide variety of aromatic diphenol and diamino groups in the ortho, meta, and para positions but not monophenolic groups such as in phenol, tyramine, or tyrosine. Plays an important role in virulence. Plays a role in dissemination to extrapulmonary sites but is not involved in pulmonary growth or in elicitation of cellular immune responses in the lung. The protein is Laccase-1 (LAC1) of Cryptococcus neoformans var. grubii serotype A (strain H99 / ATCC 208821 / CBS 10515 / FGSC 9487) (Filobasidiella neoformans var. grubii).